The primary structure comprises 1172 residues: MVWRLVLLALWVWPSTQAGHQDKDTTFDLFSISNINRKTIGAKQFRGPDPGVPAYRFVRFDYIPPVNADDLSKITKIMRQKEGFFLTAQLKQDGKSRGTLLALEGPGLSQRQFEIVSNGPADTLDLTYWIDGTRHVVSLEDVGLADSQWKNVTVQVAGETYSLHVGCDLIDSFALDEPFYEHLQAEKSRMYVAKGSARESHFRGLLQNVHLVFENSVEDILSKKGCQQGQGAEINAISENTETLRLGPHVTTEYVGPSSERRPEVCERSCEELGNMVQELSGLHVLVNQLSENLKRVSNDNQFLWELIGGPPKTRNMSACWQDGRFFAENETWVVDSCTTCTCKKFKTICHQITCPPATCASPSFVEGECCPSCLHSVDGEEGWSPWAEWTQCSVTCGSGTQQRGRSCDVTSNTCLGPSIQTRACSLSKCDTRIRQDGGWSHWSPWSSCSVTCGVGNITRIRLCNSPVPQMGGKNCKGSGRETKACQGAPCPIDGRWSPWSPWSACTVTCAGGIRERTRVCNSPEPQYGGKACVGDVQERQMCNKRSCPVDGCLSNPCFPGAQCSSFPDGSWSCGSCPVGFLGNGTHCEDLDECALVPDICFSTSKVPRCVNTQPGFHCLPCPPRYRGNQPVGVGLEAAKTEKQVCEPENPCKDKTHNCHKHAECIYLGHFSDPMYKCECQTGYAGDGLICGEDSDLDGWPNLNLVCATNATYHCIKDNCPHLPNSGQEDFDKDGIGDACDDDDDNDGVTDEKDNCQLLFNPRQADYDKDEVGDRCDNCPYVHNPAQIDTDNNGEGDACSVDIDGDDVFNERDNCPYVYNTDQRDTDGDGVGDHCDNCPLVHNPDQTDVDNDLVGDQCDNNEDIDDDGHQNNQDNCPYISNANQADHDRDGQGDACDPDDDNDGVPDDRDNCRLVFNPDQEDLDGDGRGDICKDDFDNDNIPDIDDVCPENNAISETDFRNFQMVPLDPKGTTQIDPNWVIRHQGKELVQTANSDPGIAVGFDEFGSVDFSGTFYVNTDRDDDYAGFVFGYQSSSRFYVVMWKQVTQTYWEDQPTRAYGYSGVSLKVVNSTTGTGEHLRNALWHTGNTPGQVRTLWHDPRNIGWKDYTAYRWHLTHRPKTGYIRVLVHEGKQVMADSGPIYDQTYAGGRLGLFVFSQEMVYFSDLKYECRDI.

Residues 1–18 form the signal peptide; that stretch reads MVWRLVLLALWVWPSTQA. The Laminin G-like domain occupies 19-215; that stretch reads GHQDKDTTFD…LQNVHLVFEN (197 aa). The tract at residues 19–232 is heparin-binding; it reads GHQDKDTTFD…KKGCQQGQGA (214 aa). 3 N-linked (GlcNAc...) asparagine glycosylation sites follow: asparagine 151, asparagine 316, and asparagine 330. Residues 318–375 form the VWFC domain; that stretch reads SACWQDGRFFAENETWVVDSCTTCTCKKFKTICHQITCPPATCASPSFVEGECCPSCL. 3 consecutive TSP type-1 domains span residues 381-431, 437-492, and 494-549; these read EEGW…SKCD, DGGW…APCP, and DGRW…RSCP. Intrachain disulfides connect cysteine 393–cysteine 425, cysteine 397–cysteine 430, cysteine 408–cysteine 415, cysteine 449–cysteine 486, cysteine 453–cysteine 491, cysteine 464–cysteine 476, cysteine 506–cysteine 543, cysteine 510–cysteine 548, cysteine 521–cysteine 533, cysteine 553–cysteine 564, cysteine 558–cysteine 574, cysteine 577–cysteine 588, cysteine 594–cysteine 610, cysteine 601–cysteine 619, cysteine 622–cysteine 646, cysteine 652–cysteine 665, cysteine 659–cysteine 678, cysteine 680–cysteine 691, cysteine 707–cysteine 715, cysteine 720–cysteine 740, cysteine 756–cysteine 776, cysteine 779–cysteine 799, cysteine 815–cysteine 835, cysteine 838–cysteine 858, cysteine 876–cysteine 896, cysteine 912–cysteine 932, and cysteine 948–cysteine 1169. An N-linked (GlcNAc...) asparagine glycan is attached at asparagine 457. An EGF-like 1 domain is found at 549-589; sequence PVDGCLSNPCFPGAQCSSFPDGSWSCGSCPVGFLGNGTHCE. The N-linked (GlcNAc...) asparagine glycan is linked to asparagine 584. An EGF-like 2 domain is found at 648-692; it reads PENPCKDKTHNCHKHAECIYLGHFSDPMYKCECQTGYAGDGLICG. TSP type-3 repeat units lie at residues 693–728, 729–764, 765–787, 788–823, 824–846, 847–884, 885–920, and 921–956; these read EDSD…NSGQ, EDFD…NPRQ, ADYD…NPAQ, IDTD…NTDQ, RDTD…NPDQ, TDVD…NANQ, ADHD…NPDQ, and EDLD…AISE. Asparagine 710 carries N-linked (GlcNAc...) asparagine glycosylation. The tract at residues 843-931 is disordered; the sequence is NPDQTDVDND…DLDGDGRGDI (89 aa). A compositionally biased stretch (acidic residues) spans 847–866; the sequence is TDVDNDLVGDQCDNNEDIDD. The segment covering 870-884 has biased composition (polar residues); it reads QNNQDNCPYISNANQ. The span at 896-905 shows a compositional bias: acidic residues; it reads CDPDDDNDGV. The Cell attachment site signature appears at 928–930; it reads RGD. Residues 960 to 1172 form the TSP C-terminal domain; the sequence is RNFQMVPLDP…SDLKYECRDI (213 aa). Asparagine 1069 is a glycosylation site (N-linked (GlcNAc...) asparagine).

This sequence belongs to the thrombospondin family. As to quaternary structure, homotrimer; disulfide-linked. Interacts (via the TSP type I repeats) with CD36; the interaction conveys an antiangiogenic effect. Interacts (via the TSP type I repeats) with HRG; the interaction blocks the antiangiogenic effect of THBS2 with CD36. Can bind to fibrinogen, fibronectin, laminin and type V collagen. As to expression, high expression in invertebral disk tissue.

Its function is as follows. Adhesive glycoprotein that mediates cell-to-cell and cell-to-matrix interactions. Ligand for CD36 mediating antiangiogenic properties. The polypeptide is Thrombospondin-2 (THBS2) (Homo sapiens (Human)).